A 339-amino-acid chain; its full sequence is Heat-inducible transcription repressor HrcA (339 aa).

Belongs to the HrcA family.

Negative regulator of class I heat shock genes (grpE-dnaK-dnaJ and groELS operons). Prevents heat-shock induction of these operons. This Leifsonia xyli subsp. xyli (strain CTCB07) protein is Heat-inducible transcription repressor HrcA.